The primary structure comprises 75 residues: UPF0352 protein YejL (75 aa).

Belongs to the UPF0352 family.

This chain is UPF0352 protein YejL, found in Shigella flexneri.